The chain runs to 137 residues: ATP synthase epsilon chain (137 aa).

It belongs to the ATPase epsilon chain family. As to quaternary structure, F-type ATPases have 2 components, CF(1) - the catalytic core - and CF(0) - the membrane proton channel. CF(1) has five subunits: alpha(3), beta(3), gamma(1), delta(1), epsilon(1). CF(0) has three main subunits: a, b and c.

Its subcellular location is the cellular thylakoid membrane. Produces ATP from ADP in the presence of a proton gradient across the membrane. The sequence is that of ATP synthase epsilon chain from Trichormus variabilis (strain ATCC 29413 / PCC 7937) (Anabaena variabilis).